A 143-amino-acid chain; its full sequence is High mobility group protein B (143 aa).

Positions 1–22 are disordered; the sequence is MSKAASQYATLEDLPSKPKRPQ. A DNA-binding region (HMG box) is located at residues 18–86; it reads PKRPQTGFFI…TYDKQNDQWK (69 aa). The residue at position 70 (A70) is a Blocked amino end (Ala). Composition is skewed to basic and acidic residues over residues 100–120 and 131–143; these read AKKALKEKTKKSKAAEKELEK and AKKDDKKAPAKKK. Positions 100-143 are disordered; the sequence is AKKALKEKTKKSKAAEKELEKSKKKAPAAAPAKKDDKKAPAKKK.

The protein localises to the nucleus. It localises to the chromosome. This is High mobility group protein B from Tetrahymena thermophila.